Consider the following 647-residue polypeptide: Centrosomal protein of 72 kDa (647 aa).

LRR repeat units follow at residues 29–50 (ELQS…GHSL), 55–76 (GLKS…QYLT), and 77–98 (ALES…FRLH). One can recognise an LRRCT domain in the interval 111 to 150 (NPVVKVEPDYRLFVVHLLPKLQQLDDRPVRASERKASRLH). 2 stretches are compositionally biased toward basic and acidic residues: residues 152-161 (ASEDSLDSKE) and 220-234 (KGRE…ESRH). 3 disordered regions span residues 152–176 (ASED…HHPR), 211–256 (PPGS…RETR), and 285–413 (PEAS…ALPG). Residue Ser237 is modified to Phosphoserine. Positions 366-377 (SLSRQDSSESRN) are enriched in basic and acidic residues. Ser382 carries the phosphoserine modification. The segment covering 390–402 (EEQRSRGVTDTRE) has biased composition (basic and acidic residues). Ser404 carries the post-translational modification Phosphoserine. Positions 476–620 (SLALESKSLQ…AQHRAEVEQM (145 aa)) form a coiled coil.

Belongs to the CEP72 family. In terms of assembly, interacts with KIZ, PCM1 and CDK5RAP2.

The protein resides in the cytoplasm. The protein localises to the cytoskeleton. It localises to the microtubule organizing center. It is found in the centrosome. Its subcellular location is the centriolar satellite. Functionally, involved in the recruitment of key centrosomal proteins to the centrosome. Provides centrosomal microtubule-nucleation activity on the gamma-tubulin ring complexes (gamma-TuRCs) and has critical roles in forming a focused bipolar spindle, which is needed for proper tension generation between sister chromatids. Required for localization of KIZ, AKAP9 and gamma-tubulin ring complexes (gamma-TuRCs). Involved in centriole duplication. Required for CDK5RAP22, CEP152, WDR62 and CEP63 centrosomal localization and promotes the centrosomal localization of CDK2. This chain is Centrosomal protein of 72 kDa (CEP72), found in Homo sapiens (Human).